Here is a 284-residue protein sequence, read N- to C-terminus: Probable endonuclease 4 (284 aa).

The Zn(2+) site is built by His-66, His-106, Glu-142, Asp-176, His-179, His-213, Asp-226, His-228, and Glu-258.

This sequence belongs to the AP endonuclease 2 family. The cofactor is Zn(2+).

It catalyses the reaction Endonucleolytic cleavage to 5'-phosphooligonucleotide end-products.. Its function is as follows. Endonuclease IV plays a role in DNA repair. It cleaves phosphodiester bonds at apurinic or apyrimidinic (AP) sites, generating a 3'-hydroxyl group and a 5'-terminal sugar phosphate. The protein is Probable endonuclease 4 of Natranaerobius thermophilus (strain ATCC BAA-1301 / DSM 18059 / JW/NM-WN-LF).